Reading from the N-terminus, the 226-residue chain is ATP synthase F(0) complex subunit a (226 aa).

6 consecutive transmembrane segments (helical) span residues 12–32, 68–88, 97–117, 135–155, 164–184, and 189–209; these read PTMMGLPIVILIIMFPSILFP, WTLMLMSLILFIGSTNLLGLL, QLSMNLGMAIPLWAGTVFMGF, IFLIPMLVIIETISLFIQPMA, ITAGHLLIHLIGGATLALMDI, and ALITFIILILLTILEFAVAMI.

This sequence belongs to the ATPase A chain family. As to quaternary structure, component of the ATP synthase complex composed at least of ATP5F1A/subunit alpha, ATP5F1B/subunit beta, ATP5MC1/subunit c (homooctomer), MT-ATP6/subunit a, MT-ATP8/subunit 8, ATP5ME/subunit e, ATP5MF/subunit f, ATP5MG/subunit g, ATP5MK/subunit k, ATP5MJ/subunit j, ATP5F1C/subunit gamma, ATP5F1D/subunit delta, ATP5F1E/subunit epsilon, ATP5PF/subunit F6, ATP5PB/subunit b, ATP5PD/subunit d, ATP5PO/subunit OSCP. ATP synthase complex consists of a soluble F(1) head domain (subunits alpha(3) and beta(3)) - the catalytic core - and a membrane F(0) domain - the membrane proton channel (subunits c, a, 8, e, f, g, k and j). These two domains are linked by a central stalk (subunits gamma, delta, and epsilon) rotating inside the F1 region and a stationary peripheral stalk (subunits F6, b, d, and OSCP). Interacts with DNAJC30; interaction is direct.

The protein localises to the mitochondrion inner membrane. It carries out the reaction H(+)(in) = H(+)(out). Functionally, subunit a, of the mitochondrial membrane ATP synthase complex (F(1)F(0) ATP synthase or Complex V) that produces ATP from ADP in the presence of a proton gradient across the membrane which is generated by electron transport complexes of the respiratory chain. ATP synthase complex consist of a soluble F(1) head domain - the catalytic core - and a membrane F(1) domain - the membrane proton channel. These two domains are linked by a central stalk rotating inside the F(1) region and a stationary peripheral stalk. During catalysis, ATP synthesis in the catalytic domain of F(1) is coupled via a rotary mechanism of the central stalk subunits to proton translocation. With the subunit c (ATP5MC1), forms the proton-conducting channel in the F(0) domain, that contains two crucial half-channels (inlet and outlet) that facilitate proton movement from the mitochondrial intermembrane space (IMS) into the matrix. Protons are taken up via the inlet half-channel and released through the outlet half-channel, following a Grotthuss mechanism. In Equus asinus (Donkey), this protein is ATP synthase F(0) complex subunit a.